The following is a 496-amino-acid chain: UDP-glycosyltransferase 73C3 (496 aa).

UDP-alpha-D-glucose contacts are provided by residues S297, 357 to 359 (APQ), 374 to 382 (HCGWNSTLE), and 396 to 399 (FGDQ).

This sequence belongs to the UDP-glycosyltransferase family.

In Arabidopsis thaliana (Mouse-ear cress), this protein is UDP-glycosyltransferase 73C3 (UGT73C3).